We begin with the raw amino-acid sequence, 559 residues long: ADP,ATP carrier protein 1 (559 aa).

Residues 1–10 show a composition bias toward polar residues; the sequence is MNEVENNNHS. The disordered stretch occupies residues 1–22; it reads MNEVENNNHSFPREDIPTEDEI. N8 is a glycosylation site (N-linked (GlcNAc...) asparagine). The next 4 membrane-spanning stretches (helical) occupy residues 46-66, 79-99, 111-131, and 174-194; these read FALL…MRIL, TILF…VFLI, IFSI…AVFL, and IVFI…FLSF. N-linked (GlcNAc...) asparagine glycosylation is present at N196. Transmembrane regions (helical) follow at residues 210 to 230 and 242 to 262; these read PLII…GAFF and QVLL…VIFL. A glycan (N-linked (GlcNAc...) asparagine) is linked at N290. 3 helical membrane passes run 305–325, 354–373, and 377–397; these read LLLA…MVES, QYMT…SSYV, and GFLL…VLFL. An N-linked (GlcNAc...) asparagine glycan is attached at N403. 3 helical membrane passes run 425–447, 473–493, and 503–523; these read YVLE…YSAF, IFGK…FEAL, and PITA…IIYL.

The protein belongs to the ADP/ATP translocase tlc family.

It localises to the cell membrane. ATP transporter involved in the uptake of ATP from the host cell cytoplasm. Provides the microsporidian cell with host ATP in exchange for ADP. This is an obligate exchange system. This energy acquiring activity is an important component of microsporidian parasitism. The sequence is that of ADP,ATP carrier protein 1 (NTT1) from Encephalitozoon cuniculi (strain GB-M1) (Microsporidian parasite).